The sequence spans 604 residues: uncharacterized protein (604 aa).

One can recognise an ABC transmembrane type-1 domain in the interval 45-329; sequence LPLSFLTVLI…LGQVYNQLLM (285 aa). Transmembrane regions (helical) follow at residues 49–69, 82–102, 162–182, 184–204, 273–293, and 297–317; these read FLTVLIGTAVKLVIPILIGVY, LLIQLIFIISGLYVLNYAANV, VINLLTDLLLLAGVIIILFTL, PELTIAIMVTLPIMFFISTSL, LVEMTNAIGTAVLIWYGATLI, and TITIGVFVSFAFYLGMFWEPI. Residues 363 to 597 form the ABC transporter domain; sequence ISFEEVEFSY…GGIYAGLVKA (235 aa). An ATP-binding site is contributed by 396-403; the sequence is GHTGSGKT.

It belongs to the ABC transporter superfamily.

The protein resides in the cell membrane. This is an uncharacterized protein from Bacillus subtilis (strain 168).